The chain runs to 194 residues: Peroxynitrite isomerase 1 (194 aa).

Residues 40 to 46 carry the GXWXGXG motif; it reads GVWRGEG. 2 residues coordinate heme b: lysine 157 and histidine 184.

This sequence belongs to the nitrobindin family. As to quaternary structure, homodimer. Heme b is required as a cofactor.

It carries out the reaction peroxynitrite = nitrate. Its pathway is nitrogen metabolism. Its function is as follows. Heme-binding protein able to scavenge peroxynitrite and to protect free L-tyrosine against peroxynitrite-mediated nitration, by acting as a peroxynitrite isomerase that converts peroxynitrite to nitrate. Therefore, this protein likely plays a role in peroxynitrite sensing and in the detoxification of reactive nitrogen and oxygen species (RNS and ROS, respectively). Is able to bind nitric oxide (NO) in vitro, but may act as a sensor of peroxynitrite levels in vivo. In Mycobacterium ulcerans (strain Agy99), this protein is Peroxynitrite isomerase 1.